The sequence spans 700 residues: Elongation factor G 1 (700 aa).

In terms of domain architecture, tr-type G spans 8–290; it reads ERYRNIGISA…AVIDYLPSPA (283 aa). GTP is bound by residues 17-24, 88-92, and 142-145; these read AHIDAGKT, DTPGH, and NKMD.

It belongs to the TRAFAC class translation factor GTPase superfamily. Classic translation factor GTPase family. EF-G/EF-2 subfamily.

It is found in the cytoplasm. Its function is as follows. Catalyzes the GTP-dependent ribosomal translocation step during translation elongation. During this step, the ribosome changes from the pre-translocational (PRE) to the post-translocational (POST) state as the newly formed A-site-bound peptidyl-tRNA and P-site-bound deacylated tRNA move to the P and E sites, respectively. Catalyzes the coordinated movement of the two tRNA molecules, the mRNA and conformational changes in the ribosome. This is Elongation factor G 1 from Bordetella bronchiseptica (strain ATCC BAA-588 / NCTC 13252 / RB50) (Alcaligenes bronchisepticus).